The chain runs to 575 residues: MALNLSHQLGVLAGTPIKSGEMTDSSLLSISPPSARMMTPKAMNRNYKAHGTDPSPPMSPILGATRADLSVACKAFAVENGIGTIEEQRTYREGGIGGKKEGGGGVPVFVMMPLDSVTMGNTVNRRKAMKASLQALKSAGVEGIMIDVWWGLVEKESPGTYNWGGYNELLELAKKLGLKVQAVMSFHQCGGNVGDSVTIPLPQWVVEEVDKDPDLAYTDQWGRRNHEYISLGADTLPVLKGRTPVQCYADFMRAFRDNFKHLLGETIVEIQVGMGPAGELRYPSYPEQEGTWKFPGIGAFQCYDKYSLSSLKAAAETYGKPEWGSTGPTDAGHYNNWPEDTQFFKKEGGGWNSEYGDFFLSWYSQMLLDHGERILSSAKSIFENMGVKISVKIAGIHWHYGTRSHAPELTAGYYNTRFRDGYLPIAQMLARHNAIFNFTCIEMRDHEQPQDALCAPEKLVNQVALATLAAEVPLAGENALPRYDDYAHEQILKASALNLDQNNEGEPREMCAFTYLRMNPELFQADNWGKFVAFVKKMGEGRDSHRCREEVEREAEHFVHVTQPLVQEAAVALTH.

Residues 1-41 (MALNLSHQLGVLAGTPIKSGEMTDSSLLSISPPSARMMTPK) constitute a chloroplast transit peptide. A phosphoserine mark is found at S55 and S59. Residues C73 and C511 are joined by a disulfide bond. Residues D147, H187, and D195 each coordinate substrate. The active-site Proton donor is the E279. Residues K392, H397, and T439 each coordinate substrate. Catalysis depends on E477, which acts as the Proton acceptor. Substrate-binding positions include 478–479 (NA) and R517.

This sequence belongs to the glycosyl hydrolase 14 family. Expressed in leaves, roots, flowers, pollen, and seeds.

It localises to the plastid. Its subcellular location is the chloroplast. It carries out the reaction Hydrolysis of (1-&gt;4)-alpha-D-glucosidic linkages in polysaccharides so as to remove successive maltose units from the non-reducing ends of the chains.. With respect to regulation, redox regulation; active in reducing conditions, inactive in oxidizing conditions. Thioredoxins f1, m1, and y1 mediate the reversible reductive activation of oxidized BAM1. Its function is as follows. Beta-amylase activity. Can use p-nitrophenyl maltopentaoside (PNPG5) as substrate only in reduced form. Can play a minor role in the starch degradation and maltose metabolism in chloroplasts during the night. More active on phosphorylated glucan. Interacts directly with starch or other alpha-1,4-glucan. The protein is Beta-amylase 1, chloroplastic (BAM1) of Arabidopsis thaliana (Mouse-ear cress).